Here is a 639-residue protein sequence, read N- to C-terminus: Coiled-coil domain-containing protein 27 (639 aa).

Residues 154 to 176 (YPRKRSEPSDPSPTGSPTVVKKS) are disordered. A coiled-coil region spans residues 203 to 242 (QRFSEMESQMQKKDQEILTLQKEKEALKKQLKNLLRGKGT). The disordered stretch occupies residues 291–385 (ESSKELHVEP…EECHPKRSYS (95 aa)). The span at 292 to 309 (SSKELHVEPGSAIEEKSS) shows a compositional bias: basic and acidic residues. A compositionally biased stretch (low complexity) spans 310 to 320 (EGPPEEAAAAK). 2 stretches are compositionally biased toward acidic residues: residues 336 to 350 (GPEE…EVEG) and 358 to 369 (EGEILVNEEEAS). The span at 370 to 380 (WELREDEECHP) shows a compositional bias: basic and acidic residues.

The chain is Coiled-coil domain-containing protein 27 (Ccdc27) from Mus musculus (Mouse).